Reading from the N-terminus, the 555-residue chain is Formate--tetrahydrofolate ligase (555 aa).

Belongs to the formate--tetrahydrofolate ligase family.

The catalysed reaction is (6S)-5,6,7,8-tetrahydrofolate + formate + ATP = (6R)-10-formyltetrahydrofolate + ADP + phosphate. The protein operates within one-carbon metabolism; tetrahydrofolate interconversion. In Porphyromonas gingivalis (strain ATCC BAA-308 / W83), this protein is Formate--tetrahydrofolate ligase.